Here is a 274-residue protein sequence, read N- to C-terminus: Thiamine kinase (274 aa).

Belongs to the thiamine kinase family.

The enzyme catalyses thiamine + ATP = thiamine phosphate + ADP + H(+). The protein operates within cofactor biosynthesis; thiamine diphosphate biosynthesis; thiamine phosphate from thiamine: step 1/1. Functionally, catalyzes the ATP-dependent phosphorylation of thiamine to thiamine phosphate. Is involved in thiamine salvage. The polypeptide is Thiamine kinase (Salmonella gallinarum (strain 287/91 / NCTC 13346)).